A 1264-amino-acid chain; its full sequence is MAEQKSTNMWNWEVTGFESKKSPSSEEGVHRTPSSMLRRYSIPKNSLPPHSSELASKVQSLKDKVQLAKDDYVGLRQEATDLQEYSNAKLERVTRYLGVLADKSRKLDQYALETEARISPLINEKKRLFNDLLTTKGNVKVFCRARPLFEDEGPSIIEFPDNCTIRVNTSDDTLSNPKKEFEFDRVYGPQVGQASLFSDVQPFVQSALDGSNVSIFAYGQTHAGKTYTMEGSNQDRGLYARCFEELMDLANSDSTSASQFSFSVSVFELYNEQVRDLLSGCQSNLPKINMGLRESVIELSQEKVDNPSEFMRVLNSAFQNRGNDKSKSTVTHLIVSIHICYSNTITRENVISKLSLVDLAGSEGLTVEDDNGDHVTDLLHVTNSISALGDVLSSLTSKRDTIPYENSFLTRILADSLGGSSKTLMIVNICPSARNLSEIMSCLNYAARARNTVPSLGNRDTIKKWRDVANDARKEVLEKERENQRLKQEVTGLKQALKEANDQCVLLYNEVQRAWRVSFTLQSDLKSENAMVVDKHKIEKEQNFQLRNQIAQLLQLEQEQKLQAQQQDSTIQNLQSKVKDLESQLSKALKSDMTRSRDPLEPQPRAAENTLDSSAVTKKLEEELKKRDALIERLHEENEKLFDRLTEKSVASSTQVSSPSSKASPTVQPADVDSAGTLPSSVDKNEGTITLVKSSSELVKTTPAGEYLTAALNDFDPEQYEGLAAIADGANKLLMLVLAAVIKAGASREHEILAEIRDSVFSFIRKMEPRRVMDTMLVSRVRILYIRSLLARSPELQSIKVSPVERFLEKPYTGRTRSSSGSSSPGRSPVRYYDEQIYGFKVNLKPEKKSKLVSVVSRIRGHDQDTGRQQVTGGKLREIQDEAKSFAIGNKPLAALFVHTPAGELQRQIRSWLAESFEFLSVTADDVSGVTTGQLELLSTAIMDGWMAGVGAAVPPHTDALGQLLSEYAKRVYTSQMQHLKDIAGTLASEEAEDAGQVAKLRSALESVDHKRRKILQQMRSDAALFTLEEGSSPVQNPSTAAEDSRLASLISLDAILKQVKEITRQASVHVLSKSKKKALLESLDELNERMPSLLDVDHPCAQREIDTAHQLVETIPEQEDNLQDEKRPSIDSISSTETDVSQWNVLQFNTGGSSAPFIIKCGANSNSELVIKADARIQEPKGGEIVRVVPRPSVLENMSLEEMKQVFGQLPEALSSLALARTADGTRARYSRLYRTLAMKVPSLRDLVGELEKGGVLKDTKST.

Positions 1-10 are enriched in polar residues; it reads MAEQKSTNMW. The tract at residues 1–52 is disordered; the sequence is MAEQKSTNMWNWEVTGFESKKSPSSEEGVHRTPSSMLRRYSIPKNSLPPHSS. Over residues 18–30 the composition is skewed to basic and acidic residues; it reads ESKKSPSSEEGVH. Residues 53 to 84 adopt a coiled-coil conformation; sequence ELASKVQSLKDKVQLAKDDYVGLRQEATDLQE. The Kinesin motor domain occupies 138–452; it reads NVKVFCRARP…LNYAARARNT (315 aa). Position 219–226 (219–226) interacts with ATP; sequence GQTHAGKT. Coiled coils occupy residues 462–511, 545–592, and 617–640; these read IKKW…YNEV, QLRN…LKSD, and TKKL…ENEK. Positions 588–615 are disordered; sequence ALKSDMTRSRDPLEPQPRAAENTLDSSA. Basic and acidic residues predominate over residues 589 to 600; it reads LKSDMTRSRDPL. Positions 652 to 668 are enriched in low complexity; the sequence is SSTQVSSPSSKASPTVQ. 2 disordered regions span residues 652 to 684 and 1117 to 1136; these read SSTQ…SVDK and PEQE…SISS.

Belongs to the TRAFAC class myosin-kinesin ATPase superfamily. Kinesin family. KIN-14 subfamily. Homodimer and heterodimer with KCA1. Interacts with CDKA-1. Interacts with At4g14310. As to expression, expressed in roots, leaves, stems and flowers.

It localises to the cell membrane. Functionally, kinesin-like protein required for chloroplast movements and anchor to the plasma membrane. Mediates chloroplast movement via chloroplast actin (cp-actin) filaments. Required for the chloroplast avoidance response under high intensity blue light. Mediates redundantly with CHUP1 the nuclear avoidance response under high intensity blue light. May be involved in division plane determination. The sequence is that of Kinesin-like protein KIN-14B from Arabidopsis thaliana (Mouse-ear cress).